The sequence spans 274 residues: Nitrogenase iron protein (274 aa).

Residue 8 to 15 (GKGGIGKS) participates in ATP binding. Residue C94 coordinates [4Fe-4S] cluster. R97 carries the ADP-ribosylarginine; by dinitrogenase reductase ADP-ribosyltransferase modification. C131 lines the [4Fe-4S] cluster pocket.

It belongs to the NifH/BchL/ChlL family. Homodimer. [4Fe-4S] cluster serves as cofactor. In terms of processing, the reversible ADP-ribosylation of Arg-97 inactivates the nitrogenase reductase and regulates nitrogenase activity.

The catalysed reaction is N2 + 8 reduced [2Fe-2S]-[ferredoxin] + 16 ATP + 16 H2O = H2 + 8 oxidized [2Fe-2S]-[ferredoxin] + 2 NH4(+) + 16 ADP + 16 phosphate + 6 H(+). Functionally, the key enzymatic reactions in nitrogen fixation are catalyzed by the nitrogenase complex, which has 2 components: the iron protein and the molybdenum-iron protein. The chain is Nitrogenase iron protein from Dehalococcoides mccartyi (strain ATCC BAA-2266 / KCTC 15142 / 195) (Dehalococcoides ethenogenes (strain 195)).